The following is a 20-amino-acid chain: Toxin TpF21-Cocle (20 aa).

The region spanning lysine 1–lysine 20 is the LCN-type CS-alpha/beta domain.

Belongs to the long (4 C-C) scorpion toxin superfamily. Sodium channel inhibitor family. Beta subfamily. As to expression, expressed by the venom gland.

It is found in the secreted. Functionally, beta toxins bind voltage-independently at site-4 of sodium channels (Nav) and shift the voltage of activation toward more negative potentials thereby affecting sodium channel activation and promoting spontaneous and repetitive firing. The chain is Toxin TpF21-Cocle from Tityus pachyurus (Colombian scorpion).